A 462-amino-acid chain; its full sequence is BPI fold-containing family B member 2 (462 aa).

The N-terminal stretch at 1 to 22 (MARACSLGLLLLLLLLLRTVVT) is a signal peptide. Threonine 55 carries the phosphothreonine modification. Phosphoserine is present on serine 63. N-linked (GlcNAc...) asparagine glycosylation is present at asparagine 99. Residues cysteine 140 and cysteine 177 are joined by a disulfide bond. Asparagine 297 and asparagine 336 each carry an N-linked (GlcNAc...) asparagine glycan.

Belongs to the BPI/LBP/Plunc superfamily. BPI/LBP family.

It localises to the secreted. The sequence is that of BPI fold-containing family B member 2 (Bpifb2) from Mus musculus (Mouse).